Reading from the N-terminus, the 229-residue chain is Flagellar brake protein YcgR (229 aa).

In terms of domain architecture, PilZ spans 134-218; sequence QLSLRVLDVS…GERALQRYID (85 aa).

This sequence belongs to the YcgR family. In terms of assembly, monomer. Interacts with the flagellar basal bodies.

The protein resides in the bacterial flagellum basal body. Acts as a flagellar brake, regulating swimming and swarming in a bis-(3'-5') cyclic diguanylic acid (c-di-GMP)-dependent manner. Binds 1 c-di-GMP dimer per subunit. Increasing levels of c-di-GMP lead to decreased motility. This chain is Flagellar brake protein YcgR, found in Methylibium petroleiphilum (strain ATCC BAA-1232 / LMG 22953 / PM1).